The primary structure comprises 108 residues: Structural protein 1 (108 aa).

The tract at residues 1–20 (MSRVSEYGVPEGVRESDSDT) is disordered. The Intravirion portion of the chain corresponds to 1 to 77 (MSRVSEYGVP…LKMQMDRLCN (77 aa)). A helical; Signal-anchor for type II membrane protein transmembrane segment spans residues 78 to 98 (VLGVVLQMATLALVTYIAFVV). At 99-108 (HTRATSCKRE) the chain is on the virion surface side.

It belongs to the varicellovirus ORF1 protein family. As to quaternary structure, homodimer. Post-translationally, phosphorylated.

The protein localises to the virion membrane. It localises to the host Golgi apparatus membrane. The chain is Structural protein 1 from Varicella-zoster virus (strain Dumas) (HHV-3).